The primary structure comprises 482 residues: Glycogen synthase (482 aa).

K15 contributes to the ADP-alpha-D-glucose binding site.

Belongs to the glycosyltransferase 1 family. Bacterial/plant glycogen synthase subfamily.

The catalysed reaction is [(1-&gt;4)-alpha-D-glucosyl](n) + ADP-alpha-D-glucose = [(1-&gt;4)-alpha-D-glucosyl](n+1) + ADP + H(+). It functions in the pathway glycan biosynthesis; glycogen biosynthesis. Synthesizes alpha-1,4-glucan chains using ADP-glucose. This is Glycogen synthase from Hydrogenobaculum sp. (strain Y04AAS1).